A 273-amino-acid chain; its full sequence is Small ribosomal subunit protein uS3 (273 aa).

A KH type-2 domain is found at 43 to 111 (IRQLMSTGME…QVQLNILEVK (69 aa)). Residues 218–227 (QQAAAAPSRG) are compositionally biased toward low complexity. The interval 218–273 (QQAAAAPSRGRAGDRPGRPGGDRRRRNDRPAAEAAPAAVEAPAAEAAAPAAEGGQA) is disordered. Positions 228 to 239 (RAGDRPGRPGGD) are enriched in basic and acidic residues. The span at 249 to 273 (AEAAPAAVEAPAAEAAAPAAEGGQA) shows a compositional bias: low complexity.

This sequence belongs to the universal ribosomal protein uS3 family. As to quaternary structure, part of the 30S ribosomal subunit. Forms a tight complex with proteins S10 and S14.

In terms of biological role, binds the lower part of the 30S subunit head. Binds mRNA in the 70S ribosome, positioning it for translation. In Paenarthrobacter aurescens (strain TC1), this protein is Small ribosomal subunit protein uS3.